The primary structure comprises 231 residues: Probable septum site-determining protein MinC (231 aa).

Residues 100 to 125 (EGKEKSPRPAPAPQAPAQNTTPVTKT) are disordered.

Belongs to the MinC family. As to quaternary structure, interacts with MinD and FtsZ.

Cell division inhibitor that blocks the formation of polar Z ring septums. Rapidly oscillates between the poles of the cell to destabilize FtsZ filaments that have formed before they mature into polar Z rings. Prevents FtsZ polymerization. This chain is Probable septum site-determining protein MinC, found in Escherichia coli O81 (strain ED1a).